The primary structure comprises 330 residues: NADH-quinone oxidoreductase subunit H (330 aa).

8 helical membrane passes run 5–25 (LLTLILIVIKLGLVLGTVLTL), 78–98 (WVFMLAPAISTITALLAFAVI), 120–140 (IGLLYLFALSSLAVYGVALGG), 155–175 (AMAQMISYELAMGLAIVPVVM), 191–211 (SLPNMLRHPLAFFIFLVAIMA), 243–263 (FFVGEYLNLIVLGSMLTVLFL), 271–291 (LPGICWFLIKVLGVAFFFIWV), and 308–328 (WKILVPLGLLNILVTAAWLIW).

Belongs to the complex I subunit 1 family. NDH-1 is composed of 14 different subunits. Subunits NuoA, H, J, K, L, M, N constitute the membrane sector of the complex.

The protein resides in the cell inner membrane. The catalysed reaction is a quinone + NADH + 5 H(+)(in) = a quinol + NAD(+) + 4 H(+)(out). Its function is as follows. NDH-1 shuttles electrons from NADH, via FMN and iron-sulfur (Fe-S) centers, to quinones in the respiratory chain. The immediate electron acceptor for the enzyme in this species is believed to be ubiquinone. Couples the redox reaction to proton translocation (for every two electrons transferred, four hydrogen ions are translocated across the cytoplasmic membrane), and thus conserves the redox energy in a proton gradient. This subunit may bind ubiquinone. In Syntrophotalea carbinolica (strain DSM 2380 / NBRC 103641 / GraBd1) (Pelobacter carbinolicus), this protein is NADH-quinone oxidoreductase subunit H.